Here is a 748-residue protein sequence, read N- to C-terminus: Translation factor GUF1 homolog 1, mitochondrial (748 aa).

A mitochondrion-targeting transit peptide spans 1–29 (MRVGCCLLLKPIRQRLCTASISSRHIMRW). The 183-residue stretch at 94–276 (SHIRNFAVVA…AIIERVPPPT (183 aa)) folds into the tr-type G domain. GTP-binding positions include 103–110 (AHVDHGKT), 167–171 (DTPGH), and 221–224 (TKMD).

Belongs to the TRAFAC class translation factor GTPase superfamily. Classic translation factor GTPase family. LepA subfamily.

It is found in the mitochondrion inner membrane. It catalyses the reaction GTP + H2O = GDP + phosphate + H(+). In terms of biological role, promotes mitochondrial protein synthesis. May act as a fidelity factor of the translation reaction, by catalyzing a one-codon backward translocation of tRNAs on improperly translocated ribosomes. Binds to mitochondrial ribosomes in a GTP-dependent manner. The chain is Translation factor GUF1 homolog 1, mitochondrial from Trypanosoma cruzi (strain CL Brener).